The following is a 405-amino-acid chain: L-cysteine:1D-myo-inositol 2-amino-2-deoxy-alpha-D-glucopyranoside ligase (405 aa).

Zn(2+) is bound at residue C43. L-cysteinyl-5'-AMP-binding positions include 43–46 (CGIT), T58, and 81–83 (NIT). A 'HIGH' region motif is present at residues 45–55 (ITPYDATHLGH). The 'ERGGDP' region signature appears at 187–192 (ERGGDP). W227 is an L-cysteinyl-5'-AMP binding site. Position 231 (C231) interacts with Zn(2+). L-cysteinyl-5'-AMP is bound at residue 249 to 251 (GSD). Position 256 (H256) interacts with Zn(2+). Residue I283 coordinates L-cysteinyl-5'-AMP. Positions 289–293 (KMSKS) match the 'KMSKS' region motif.

It belongs to the class-I aminoacyl-tRNA synthetase family. MshC subfamily. As to quaternary structure, monomer. Zn(2+) serves as cofactor.

It catalyses the reaction 1D-myo-inositol 2-amino-2-deoxy-alpha-D-glucopyranoside + L-cysteine + ATP = 1D-myo-inositol 2-(L-cysteinylamino)-2-deoxy-alpha-D-glucopyranoside + AMP + diphosphate + H(+). In terms of biological role, catalyzes the ATP-dependent condensation of GlcN-Ins and L-cysteine to form L-Cys-GlcN-Ins. This Nakamurella multipartita (strain ATCC 700099 / DSM 44233 / CIP 104796 / JCM 9543 / NBRC 105858 / Y-104) (Microsphaera multipartita) protein is L-cysteine:1D-myo-inositol 2-amino-2-deoxy-alpha-D-glucopyranoside ligase.